The chain runs to 397 residues: Proteasome-activating nucleotidase (397 aa).

Positions 12–58 form a coiled coil; it reads GYEDYITFLKRRIRQLELQVRTLEADKERLERELSRLRTEMSRLRQP. ATP-binding positions include 182 to 187 and H321; that span reads GCGKTL. The tract at residues 395-397 is docks into pockets in the proteasome alpha-ring to cause gate opening; it reads MYG.

It belongs to the AAA ATPase family. Homohexamer. The hexameric complex has a two-ring architecture resembling a top hat that caps the 20S proteasome core at one or both ends. Upon ATP-binding, the C-terminus of PAN interacts with the alpha-rings of the proteasome core by binding to the intersubunit pockets.

Its subcellular location is the cytoplasm. Functionally, ATPase which is responsible for recognizing, binding, unfolding and translocation of substrate proteins into the archaeal 20S proteasome core particle. Is essential for opening the gate of the 20S proteasome via an interaction with its C-terminus, thereby allowing substrate entry and access to the site of proteolysis. Thus, the C-termini of the proteasomal ATPase function like a 'key in a lock' to induce gate opening and therefore regulate proteolysis. Unfolding activity requires energy from ATP hydrolysis, whereas ATP binding alone promotes ATPase-20S proteasome association which triggers gate opening, and supports translocation of unfolded substrates. This chain is Proteasome-activating nucleotidase, found in Thermococcus gammatolerans (strain DSM 15229 / JCM 11827 / EJ3).